The sequence spans 311 residues: Probable manganese-dependent inorganic pyrophosphatase (311 aa).

H9, D13, D15, D77, H99, and D151 together coordinate Mn(2+).

This sequence belongs to the PPase class C family. Mn(2+) is required as a cofactor.

The protein localises to the cytoplasm. It catalyses the reaction diphosphate + H2O = 2 phosphate + H(+). In Streptococcus equi subsp. zooepidemicus (strain MGCS10565), this protein is Probable manganese-dependent inorganic pyrophosphatase.